Here is a 275-residue protein sequence, read N- to C-terminus: N-acetyltransferase YodP (275 aa).

The N-acetyltransferase domain maps to F125–W271.

Belongs to the acetyltransferase family.

It carries out the reaction (3S)-3,6-diaminohexanoate + acetyl-CoA = (3S)-6-acetamido-3-aminohexanoate + CoA + H(+). Functionally, in vitro, is able to catalyze the acetylation of beta-lysine to N6-acetyl-beta-lysine, an archaeal osmolyte produced by methanogenic archaea. Its physiological function has not yet been elucidated. The chain is N-acetyltransferase YodP (yodP) from Bacillus subtilis (strain 168).